Consider the following 689-residue polypeptide: DNA topoisomerase 1 (689 aa).

Positions 3–113 (DNLVIVESPA…KENRVVFNEI (111 aa)) constitute a Toprim domain. Mg(2+) contacts are provided by glutamate 9 and aspartate 82. The Topo IA-type catalytic domain maps to 129-557 (EMDLVDAQQA…FYNSFKQDVE (429 aa)). Residues 163 to 168 (SAGRVQ) are interaction with DNA. Catalysis depends on tyrosine 298, which acts as the O-(5'-phospho-DNA)-tyrosine intermediate. C4-type zinc fingers lie at residues 577-603 (CEVCGSPMVIKMGRYGKFMACSNFPDC), 617-645 (CPKCNEGDVVERKSKKNRIFYGCSRYPEC), and 658-681 (CPKCHHYLVNKKKGKSSQVVCSNC).

It belongs to the type IA topoisomerase family. In terms of assembly, monomer. Mg(2+) is required as a cofactor.

The catalysed reaction is ATP-independent breakage of single-stranded DNA, followed by passage and rejoining.. Releases the supercoiling and torsional tension of DNA, which is introduced during the DNA replication and transcription, by transiently cleaving and rejoining one strand of the DNA duplex. Introduces a single-strand break via transesterification at a target site in duplex DNA. The scissile phosphodiester is attacked by the catalytic tyrosine of the enzyme, resulting in the formation of a DNA-(5'-phosphotyrosyl)-enzyme intermediate and the expulsion of a 3'-OH DNA strand. The free DNA strand then undergoes passage around the unbroken strand, thus removing DNA supercoils. Finally, in the religation step, the DNA 3'-OH attacks the covalent intermediate to expel the active-site tyrosine and restore the DNA phosphodiester backbone. This chain is DNA topoisomerase 1, found in Staphylococcus epidermidis (strain ATCC 35984 / DSM 28319 / BCRC 17069 / CCUG 31568 / BM 3577 / RP62A).